The following is a 126-amino-acid chain: Arginine decarboxylase proenzyme (126 aa).

The Schiff-base intermediate with substrate; via pyruvic acid role is filled by serine 74. A Pyruvic acid (Ser); by autocatalysis modification is found at serine 74. The active-site Proton acceptor; for processing activity is the histidine 79. Cysteine 94 (proton donor; for catalytic activity) is an active-site residue.

The protein belongs to the prokaryotic AdoMetDC family. Type 1 subfamily. In terms of assembly, heterooctamer of four alpha and four beta chains arranged as a tetramer of alpha/beta heterodimers. Pyruvate is required as a cofactor. In terms of processing, is synthesized initially as an inactive proenzyme. Formation of the active enzyme involves a self-maturation process in which the active site pyruvoyl group is generated from an internal serine residue via an autocatalytic post-translational modification. Two non-identical subunits are generated from the proenzyme in this reaction, and the pyruvate is formed at the N-terminus of the alpha chain, which is derived from the carboxyl end of the proenzyme. The post-translation cleavage follows an unusual pathway, termed non-hydrolytic serinolysis, in which the side chain hydroxyl group of the serine supplies its oxygen atom to form the C-terminus of the beta chain, while the remainder of the serine residue undergoes an oxidative deamination to produce ammonia and the pyruvoyl group blocking the N-terminus of the alpha chain.

The enzyme catalyses L-arginine + H(+) = agmatine + CO2. It participates in amine and polyamine biosynthesis; agmatine biosynthesis; agmatine from L-arginine: step 1/1. Specifically catalyzes the decarboxylation of L-arginine to agmatine. Has no S-adenosylmethionine decarboxylase (AdoMetDC) activity. This Pyrobaculum islandicum (strain DSM 4184 / JCM 9189 / GEO3) protein is Arginine decarboxylase proenzyme.